A 167-amino-acid chain; its full sequence is NADH-quinone oxidoreductase subunit B (167 aa).

Positions 40, 41, 105, and 135 each coordinate [4Fe-4S] cluster.

It belongs to the complex I 20 kDa subunit family. As to quaternary structure, NDH-1 is composed of 14 different subunits. Subunits NuoB, C, D, E, F, and G constitute the peripheral sector of the complex. [4Fe-4S] cluster serves as cofactor.

The protein localises to the cell inner membrane. It catalyses the reaction a quinone + NADH + 5 H(+)(in) = a quinol + NAD(+) + 4 H(+)(out). In terms of biological role, NDH-1 shuttles electrons from NADH, via FMN and iron-sulfur (Fe-S) centers, to quinones in the respiratory chain. The immediate electron acceptor for the enzyme in this species is believed to be ubiquinone. Couples the redox reaction to proton translocation (for every two electrons transferred, four hydrogen ions are translocated across the cytoplasmic membrane), and thus conserves the redox energy in a proton gradient. This chain is NADH-quinone oxidoreductase subunit B, found in Magnetococcus marinus (strain ATCC BAA-1437 / JCM 17883 / MC-1).